A 632-amino-acid chain; its full sequence is MSKFTWKELIQLGSPSKAYESSLACIAHIDMNAFFAQVEQMRCGLSKEDPVVCVQWNSIIAVSYAARKYGISRMDTIQEALKKCSNLIPIHTAVFKKGEDFWQYHDGCGSWVQDPAKQISVEDHKVSLEPYRRESRKALKIFKSACDLVERASIDEVFLDLGRICFNMLMFDNEYELTGDLKLKDALSNIREAFIGGNYDINSHLPLIPEKIKSLKFEGDVFNPEGRDLITDWDDVILALGSQVCKGIRDSIKDILGYTTSCGLSSTKNVCKLASNYKKPDAQTIVKNDCLLDFLDCGKFEITSFWTLGGVLGKELIDVLDLPHENSIKHIRETWPDNAGQLKEFLDAKVKQSDYDRSTSNIDPLKTADLAEKLFKLSRGRYGLPLSSRPVVKSMMSNKNLRGKSCNSIVDCISWLEVFCAELTSRIQDLEQEYNKIVIPRTVSISLKTKSYEVYRKSGPVAYKGINFQSHELLKVGIKFVTDLDIKGKNKSYYPLTKLSMTITNFDIIDLQKTVVDMFGNQVHTFKSSAGKEDEEKTTSSKADEKTPKLECCKYQVTFTDQKALQEHADYHLALKLSEGLNGAEESSKNLSFGEKRLLFSRKRPNSQHTATPQKKQVTSSKNILSFFTRKK.

Residues 26–309 (IAHIDMNAFF…FEITSFWTLG (284 aa)) form the UmuC domain. Positions 30 and 155 each coordinate Mg(2+). The UBZ3-type zinc-finger motif lies at 545–580 (EKTPKLECCKYQVTFTDQKALQEHADYHLALKLSEG). Positions 552, 553, 568, and 572 each coordinate Zn(2+). Positions 598–632 (LLFSRKRPNSQHTATPQKKQVTSSKNILSFFTRKK) are disordered. The span at 607 to 626 (SQHTATPQKKQVTSSKNILS) shows a compositional bias: polar residues. The tract at residues 625–632 (LSFFTRKK) is POL30-binding.

The protein belongs to the DNA polymerase type-Y family. In terms of assembly, interacts with POL30. This interaction is essential for the polymerase eta function.

The protein resides in the nucleus. The catalysed reaction is DNA(n) + a 2'-deoxyribonucleoside 5'-triphosphate = DNA(n+1) + diphosphate. In terms of biological role, DNA polymerase specifically involved in DNA repair. Plays an important role in translesion synthesis, where the normal high fidelity DNA polymerases cannot proceed and DNA synthesis stalls. Plays an important role in the repair of UV-induced pyrimidine dimers. Depending on the context, it inserts the correct base, but causes frequent base transitions and transversions. Efficiently incorporates nucleotides opposite to other UV or oxidative DNA damages like O(6)-methylguanine, 7,8-dihydro-8-oxoguanine, 2,6-diamino-4-hydroxy-5-formamidopyrimidine of 2'-deoxyguanosine (FaPydG), or p-benzoquinone DNA adducts. This Saccharomyces cerevisiae (strain ATCC 204508 / S288c) (Baker's yeast) protein is DNA polymerase eta (RAD30).